We begin with the raw amino-acid sequence, 529 residues long: Bifunctional purine biosynthesis protein PurH (529 aa).

An MGS-like domain is found at 1 to 148 (MQQRRPVRRA…KNHKDVAIVV (148 aa)).

This sequence belongs to the PurH family.

The catalysed reaction is (6R)-10-formyltetrahydrofolate + 5-amino-1-(5-phospho-beta-D-ribosyl)imidazole-4-carboxamide = 5-formamido-1-(5-phospho-D-ribosyl)imidazole-4-carboxamide + (6S)-5,6,7,8-tetrahydrofolate. It catalyses the reaction IMP + H2O = 5-formamido-1-(5-phospho-D-ribosyl)imidazole-4-carboxamide. It participates in purine metabolism; IMP biosynthesis via de novo pathway; 5-formamido-1-(5-phospho-D-ribosyl)imidazole-4-carboxamide from 5-amino-1-(5-phospho-D-ribosyl)imidazole-4-carboxamide (10-formyl THF route): step 1/1. It functions in the pathway purine metabolism; IMP biosynthesis via de novo pathway; IMP from 5-formamido-1-(5-phospho-D-ribosyl)imidazole-4-carboxamide: step 1/1. The sequence is that of Bifunctional purine biosynthesis protein PurH from Salmonella paratyphi A (strain ATCC 9150 / SARB42).